A 418-amino-acid polypeptide reads, in one-letter code: Histidine--tRNA ligase (418 aa).

The protein belongs to the class-II aminoacyl-tRNA synthetase family. In terms of assembly, homodimer.

It localises to the cytoplasm. The catalysed reaction is tRNA(His) + L-histidine + ATP = L-histidyl-tRNA(His) + AMP + diphosphate + H(+). In Dehalococcoides mccartyi (strain ATCC BAA-2266 / KCTC 15142 / 195) (Dehalococcoides ethenogenes (strain 195)), this protein is Histidine--tRNA ligase.